A 68-amino-acid chain; its full sequence is U-poneritoxin(01)-Om4a (68 aa).

An N-terminal signal peptide occupies residues 1-25; it reads MKPSSLTLAFLVVFMMAIMYNSVQA. Residues 26 to 39 constitute a propeptide that is removed on maturation; it reads EALADADAEAFAEA.

This sequence belongs to the formicidae venom precursor-01 superfamily. As to quaternary structure, homo- or heterodimer with PLP7 (AC A0A348G6I9); disulfide-linked. Truncated sequences of this peptide have also been found in the venom. It is possible they have been cleaved in the venom. Expressed by the venom gland.

It localises to the secreted. This homodimer composed of two cationic amphipathic alpha-helical peptides has antimicrobial activities against E.coli (MIC=3.1 uM), S.aureus (MIC=3.1 uM), and S.cerevisiae (MIC=3.1 uM). It also shows histamine-releasing activity (66.4% at 10 uM) and a weak hemolytic activity (10.5% at 50 uM). The chain is U-poneritoxin(01)-Om4a from Odontomachus monticola (Trap-jaw ant).